The following is a 175-amino-acid chain: Shikimate kinase (175 aa).

Residue 16-21 (GAGKST) coordinates ATP. A Mg(2+)-binding site is contributed by Ser-20. Residues Asp-38, Arg-62, and Gly-84 each coordinate substrate. Residue Arg-122 coordinates ATP. A substrate-binding site is contributed by Arg-141.

This sequence belongs to the shikimate kinase family. Monomer. Requires Mg(2+) as cofactor.

It is found in the cytoplasm. The catalysed reaction is shikimate + ATP = 3-phosphoshikimate + ADP + H(+). The protein operates within metabolic intermediate biosynthesis; chorismate biosynthesis; chorismate from D-erythrose 4-phosphate and phosphoenolpyruvate: step 5/7. Its function is as follows. Catalyzes the specific phosphorylation of the 3-hydroxyl group of shikimic acid using ATP as a cosubstrate. This Legionella pneumophila (strain Paris) protein is Shikimate kinase.